We begin with the raw amino-acid sequence, 623 residues long: uncharacterized protein (623 aa).

Residues 24–51 (RALVQKDELAQASQDVEDMRDCYDSLLN) adopt a coiled-coil conformation. Disordered regions lie at residues 148 to 170 (TRQR…QQLQ), 240 to 343 (FSGL…TTPP), 362 to 393 (ALPT…TKAI), 454 to 531 (SFSG…LGYS), and 585 to 607 (KKLG…PQAL). Acidic residues predominate over residues 243–259 (LEDDDGDDEIENNENDG). Residues 328–343 (VSQSAPLFPENRTTPP) show a composition bias toward polar residues. Positions 364–379 (PTPVETTRSPSSTTSP) are enriched in low complexity. Over residues 384-393 (VGSSNPTKAI) the composition is skewed to polar residues. Over residues 484-495 (PVSKLPKVSSSP) the composition is skewed to low complexity. Over residues 496 to 506 (TASPTFVSTPK) the composition is skewed to polar residues. Residues 590–606 (PSPPLTPMSLIHPPPQA) are compositionally biased toward pro residues.

This is an uncharacterized protein from Arabidopsis thaliana (Mouse-ear cress).